Consider the following 327-residue polypeptide: GMP reductase (327 aa).

Cys-176 (thioimidate intermediate) is an active-site residue. 205-228 (IIADGGIRTHGDIAKSIRFGASMV) serves as a coordination point for NADP(+).

The protein belongs to the IMPDH/GMPR family. GuaC type 2 subfamily.

It catalyses the reaction IMP + NH4(+) + NADP(+) = GMP + NADPH + 2 H(+). Catalyzes the irreversible NADPH-dependent deamination of GMP to IMP. It functions in the conversion of nucleobase, nucleoside and nucleotide derivatives of G to A nucleotides, and in maintaining the intracellular balance of A and G nucleotides. In Streptococcus agalactiae serotype V (strain ATCC BAA-611 / 2603 V/R), this protein is GMP reductase.